The primary structure comprises 88 residues: Phosphocarrier protein HPr (88 aa).

One can recognise an HPr domain in the interval M1–E88. The Pros-phosphohistidine intermediate role is filled by H15. The residue at position 46 (S46) is a Phosphoserine; by HPrK/P.

Belongs to the HPr family.

It localises to the cytoplasm. With respect to regulation, phosphorylation on Ser-46 inhibits the phosphoryl transfer from enzyme I to HPr. Functionally, general (non sugar-specific) component of the phosphoenolpyruvate-dependent sugar phosphotransferase system (sugar PTS). This major carbohydrate active-transport system catalyzes the phosphorylation of incoming sugar substrates concomitantly with their translocation across the cell membrane. The phosphoryl group from phosphoenolpyruvate (PEP) is transferred to the phosphoryl carrier protein HPr by enzyme I. Phospho-HPr then transfers it to the PTS EIIA domain. Its function is as follows. P-Ser-HPr interacts with the catabolite control protein A (CcpA), forming a complex that binds to DNA at the catabolite response elements cre, operator sites preceding a large number of catabolite-regulated genes. Thus, P-Ser-HPr is a corepressor in carbon catabolite repression (CCR), a mechanism that allows bacteria to coordinate and optimize the utilization of available carbon sources. P-Ser-HPr also plays a role in inducer exclusion, in which it probably interacts with several non-PTS permeases and inhibits their transport activity. The sequence is that of Phosphocarrier protein HPr (ptsH) from Lactococcus lactis subsp. lactis (strain IL1403) (Streptococcus lactis).